The primary structure comprises 92 residues: Protein RESPONSE TO LOW SULFUR 4 (92 aa).

Positions 8-63 (VMVAASEVEELRQKNGEMEKAVEEMRKEMLQLWRRTQVAEEAEEHLCSQLAELEAE) form a coiled coil.

In terms of biological role, required for flower development in short-day conditions. The protein is Protein RESPONSE TO LOW SULFUR 4 of Arabidopsis thaliana (Mouse-ear cress).